We begin with the raw amino-acid sequence, 99 residues long: NADH-quinone oxidoreductase subunit K (99 aa).

3 consecutive transmembrane segments (helical) span residues 3-23, 28-48, and 59-79; these read PANY…GVLV, IVVF…LVTF, and IMAF…LAII.

This sequence belongs to the complex I subunit 4L family. In terms of assembly, NDH-1 is composed of 14 different subunits. Subunits NuoA, H, J, K, L, M, N constitute the membrane sector of the complex.

It localises to the cell membrane. The enzyme catalyses a quinone + NADH + 5 H(+)(in) = a quinol + NAD(+) + 4 H(+)(out). Its function is as follows. NDH-1 shuttles electrons from NADH, via FMN and iron-sulfur (Fe-S) centers, to quinones in the respiratory chain. The immediate electron acceptor for the enzyme in this species is believed to be a menaquinone. Couples the redox reaction to proton translocation (for every two electrons transferred, four hydrogen ions are translocated across the cytoplasmic membrane), and thus conserves the redox energy in a proton gradient. The protein is NADH-quinone oxidoreductase subunit K of Frankia casuarinae (strain DSM 45818 / CECT 9043 / HFP020203 / CcI3).